The following is a 156-amino-acid chain: Small ribosomal subunit protein uS7 (156 aa).

It belongs to the universal ribosomal protein uS7 family. As to quaternary structure, part of the 30S ribosomal subunit. Contacts proteins S9 and S11.

One of the primary rRNA binding proteins, it binds directly to 16S rRNA where it nucleates assembly of the head domain of the 30S subunit. Is located at the subunit interface close to the decoding center, probably blocks exit of the E-site tRNA. The chain is Small ribosomal subunit protein uS7 from Chlorobaculum parvum (strain DSM 263 / NCIMB 8327) (Chlorobium vibrioforme subsp. thiosulfatophilum).